We begin with the raw amino-acid sequence, 159 residues long: Phosphopantetheine adenylyltransferase (159 aa).

Residue threonine 10 participates in substrate binding. ATP is bound by residues 10–11 and histidine 18; that span reads TF. Substrate is bound by residues lysine 42, leucine 74, and arginine 88. ATP-binding positions include 89 to 91, glutamate 99, and 124 to 130; these read GLR and YAFISSS.

This sequence belongs to the bacterial CoaD family. In terms of assembly, homohexamer. It depends on Mg(2+) as a cofactor.

It localises to the cytoplasm. The enzyme catalyses (R)-4'-phosphopantetheine + ATP + H(+) = 3'-dephospho-CoA + diphosphate. It participates in cofactor biosynthesis; coenzyme A biosynthesis; CoA from (R)-pantothenate: step 4/5. Functionally, reversibly transfers an adenylyl group from ATP to 4'-phosphopantetheine, yielding dephospho-CoA (dPCoA) and pyrophosphate. The chain is Phosphopantetheine adenylyltransferase from Hydrogenovibrio crunogenus (strain DSM 25203 / XCL-2) (Thiomicrospira crunogena).